Reading from the N-terminus, the 826-residue chain is Zinc phosphodiesterase ELAC protein 2 (826 aa).

A mitochondrion-targeting transit peptide spans 1–16; the sequence is MWALCSLLRSAAGRTM. Disordered regions lie at residues 16-51 and 188-231; these read MSQG…PSGC and EQRR…VSQR. The span at 27–38 shows a compositional bias: basic and acidic residues; it reads ARRERPRKDPLR. Ser199, Ser208, Ser212, Ser229, Ser618, and Ser736 each carry phosphoserine. The segment covering 208-224 has biased composition (basic and acidic residues); that stretch reads SPERSSDSESNENEPHL. The tract at residues 798–826 is disordered; it reads ELAGGLEDGEPQQKRAHTEEPQAKKVRAQ. Basic and acidic residues predominate over residues 808–820; that stretch reads PQQKRAHTEEPQA.

The protein belongs to the RNase Z family. As to quaternary structure, homodimer. Interacts with PTCD1. Zn(2+) serves as cofactor. Widely expressed. Highly expressed in heart, placenta, liver, skeletal muscle, kidney, pancreas, testis and ovary. Weakly expressed in brain, lung, spleen, thymus, prostate, small intestine, colon and leukocytes.

It is found in the mitochondrion. The protein resides in the mitochondrion matrix. It localises to the mitochondrion nucleoid. The protein localises to the nucleus. It carries out the reaction Endonucleolytic cleavage of RNA, removing extra 3' nucleotides from tRNA precursor, generating 3' termini of tRNAs. A 3'-hydroxy group is left at the tRNA terminus and a 5'-phosphoryl group is left at the trailer molecule.. Functionally, zinc phosphodiesterase, which displays mitochondrial tRNA 3'-processing endonuclease activity. Involved in tRNA maturation, by removing a 3'-trailer from precursor tRNA. Associates with mitochondrial DNA complexes at the nucleoids to initiate RNA processing and ribosome assembly. This Homo sapiens (Human) protein is Zinc phosphodiesterase ELAC protein 2 (ELAC2).